The chain runs to 864 residues: DNA mismatch repair protein MutS (864 aa).

607 to 614 contributes to the ATP binding site; it reads GPNMGGKS.

It belongs to the DNA mismatch repair MutS family.

Its function is as follows. This protein is involved in the repair of mismatches in DNA. It is possible that it carries out the mismatch recognition step. This protein has a weak ATPase activity. The polypeptide is DNA mismatch repair protein MutS (Neisseria meningitidis serogroup C / serotype 2a (strain ATCC 700532 / DSM 15464 / FAM18)).